The primary structure comprises 62 residues: MAKKLEITLTRSLIGRPSDQRVTVNTLGLRKLHQTVVQEDNAAIRGMVNKVKHLITVNEIDA.

Belongs to the universal ribosomal protein uL30 family. Part of the 50S ribosomal subunit.

The protein is Large ribosomal subunit protein uL30 of Shouchella clausii (strain KSM-K16) (Alkalihalobacillus clausii).